Reading from the N-terminus, the 180-residue chain is Large ribosomal subunit protein uL6 (180 aa).

This sequence belongs to the universal ribosomal protein uL6 family. In terms of assembly, part of the 50S ribosomal subunit.

In terms of biological role, this protein binds to the 23S rRNA, and is important in its secondary structure. It is located near the subunit interface in the base of the L7/L12 stalk, and near the tRNA binding site of the peptidyltransferase center. The chain is Large ribosomal subunit protein uL6 from Bdellovibrio bacteriovorus (strain ATCC 15356 / DSM 50701 / NCIMB 9529 / HD100).